The following is a 267-amino-acid chain: 4-hydroxy-tetrahydrodipicolinate reductase (267 aa).

Residue G10–M15 coordinates NAD(+). Residue R38 coordinates NADP(+). NAD(+)-binding positions include G100–T102 and A126–F129. The active-site Proton donor/acceptor is H156. H157 is a (S)-2,3,4,5-tetrahydrodipicolinate binding site. The active-site Proton donor is the K160. G166–T167 contacts (S)-2,3,4,5-tetrahydrodipicolinate.

This sequence belongs to the DapB family.

It localises to the cytoplasm. It catalyses the reaction (S)-2,3,4,5-tetrahydrodipicolinate + NAD(+) + H2O = (2S,4S)-4-hydroxy-2,3,4,5-tetrahydrodipicolinate + NADH + H(+). The catalysed reaction is (S)-2,3,4,5-tetrahydrodipicolinate + NADP(+) + H2O = (2S,4S)-4-hydroxy-2,3,4,5-tetrahydrodipicolinate + NADPH + H(+). The protein operates within amino-acid biosynthesis; L-lysine biosynthesis via DAP pathway; (S)-tetrahydrodipicolinate from L-aspartate: step 4/4. Functionally, catalyzes the conversion of 4-hydroxy-tetrahydrodipicolinate (HTPA) to tetrahydrodipicolinate. The sequence is that of 4-hydroxy-tetrahydrodipicolinate reductase from Desulfitobacterium hafniense (strain DSM 10664 / DCB-2).